Consider the following 255-residue polypeptide: Tabinhibitin 2 (255 aa).

Residues 1–23 (MISILVSRFLLAALVLQYATIDA) form the signal peptide. Residues 32 to 34 (RGD) carry the Cell attachment site motif. The SCP domain occupies 67 to 211 (LSKINDVRDH…KARALLTCNF (145 aa)).

Belongs to the CRISP family. As to expression, expressed in salivary glands.

It is found in the secreted. Inhibits platelet aggregation induced by all agonists tested (ADP, arachidonic acid, the thromboxane A2 analog U46619, thrombin, and snake venom snaclecs (TMVA that activates platelet through GPIB, and stejnulxin that specifically acts through GPVI (GP6))). May act by competing with fibrinogen for binding to glycoprotein IIb/IIIa (ITGA2B/ITGB3). In Tabanus yao (Horsefly), this protein is Tabinhibitin 2.